A 126-amino-acid polypeptide reads, in one-letter code: RxLR effector protein BLR31 (126 aa).

The first 22 residues, 1–22 (MLLSRAISVLALLACIRCGVHA), serve as a signal peptide directing secretion. A RxLR-dEER motif is present at residues 44–58 (RLLRTSVDFKDSEER).

It belongs to the RxLR effector family.

It is found in the secreted. It localises to the host cell. Secreted effector that triggers a hypersensitive response (HR) in 3 Lactuca saligna accessions (CGN05947, CGN05310, CGN05304). The polypeptide is RxLR effector protein BLR31 (Bremia lactucae (Lettuce downy mildew)).